Here is a 259-residue protein sequence, read N- to C-terminus: DNA repair protein RecO (259 aa).

It belongs to the RecO family.

Functionally, involved in DNA repair and RecF pathway recombination. The polypeptide is DNA repair protein RecO (Chloroherpeton thalassium (strain ATCC 35110 / GB-78)).